Here is a 212-residue protein sequence, read N- to C-terminus: Eukaryotic translation initiation factor 4E-4 (212 aa).

C143 and C147 are disulfide-bonded.

The protein belongs to the eukaryotic initiation factor 4E family. As to quaternary structure, eIF4F is a multi-subunit complex, the composition of which varies with external and internal environmental conditions. It is composed of at least eIF4A, eIF4E and eIF4G. eIF4E is also known to interact with other partners. As to expression, enriched in somatic cells.

In terms of biological role, recognizes and binds the 7-methylguanosine-containing mRNA cap during an early step in the initiation of protein synthesis and facilitates ribosome binding by inducing the unwinding of the mRNAs secondary structures. All 5 eIF4E proteins bind monomethyl cap structures. Only ife-1, ife-2 and ife-5 bind trimethyl cap structures which result from trans-splicing. Translation of trimethyl cap structure mRNAs may be regulated by intracellular redox state; disulfide bonds change the width and depth of the cap-binding cavity determining selectivity to mRNA caps. The polypeptide is Eukaryotic translation initiation factor 4E-4 (ife-4) (Caenorhabditis elegans).